Consider the following 387-residue polypeptide: Cytochrome b (387 aa).

The next 4 helical transmembrane spans lie at 32-52 (FGSL…TLAM), 76-98 (WLVR…LHIG), 113-133 (TWAI…LGYV), and 179-199 (FFAL…MHLI). Heme b-binding residues include His-82 and His-96. His-183 and His-197 together coordinate heme b. His-202 is an a ubiquinone binding site. A run of 4 helical transmembrane segments spans residues 226 to 246 (FIFK…IFVF), 290 to 310 (LLGV…PITD), 322 to 342 (LSKV…QIGA), and 349 to 369 (FIEF…VIVP).

This sequence belongs to the cytochrome b family. As to quaternary structure, fungal cytochrome b-c1 complex contains 10 subunits; 3 respiratory subunits, 2 core proteins and 5 low-molecular weight proteins. Cytochrome b-c1 complex is a homodimer. The cofactor is heme b.

Its subcellular location is the mitochondrion inner membrane. Its function is as follows. Component of the ubiquinol-cytochrome c reductase complex (complex III or cytochrome b-c1 complex) that is part of the mitochondrial respiratory chain. The b-c1 complex mediates electron transfer from ubiquinol to cytochrome c. Contributes to the generation of a proton gradient across the mitochondrial membrane that is then used for ATP synthesis. In Emericella nidulans (Aspergillus nidulans), this protein is Cytochrome b (cob).